The sequence spans 688 residues: MAFEAYRLLIANPQLYEPDFVSQAGELSEHWARENWKRREESLRHDKVCMLLMNTEPRERSHTQAEGEEEGSSSRSLATEEGEKRFSLEALEGLVDQGREVLLENLEMEEAQANSDSEGPNEADSGGEGEEFVFGVESESEMEVASEVTKLLEPDLIDSNFRYTLLEGVTSGKFAQMEFTALWGINTNNKWDLVDRVNRKLIEVKVTTRPPTGVWEEVVAHAEGTDPEHNGAYIIHDDLCGNFTPYKFGNISDLPGWPSAQDFPIRRHAFLASYGGVPSAGGIEEGLPAWDDVFMERTRNWVAPLWKKGPISVRRDDCPRMEPFNITKFITLLEDPRLRNTDKSAKWKGKILPVSWCRTIISSQEKDIDMVQEVIRDLGVIGLWEEINANPVKVERTVSALSELMRLFQEGFREKNPYISVKRKCKGWVITGHKQTPALTDTLLELGVGYKPYQMSNVVEEDMRQCETDDIEKMKWVDWMSKLAATESEPLGSKVSRDDIFKEAESRHVLDEPAKKMCSKVYDLYRSHKIGATCSKFMGFYSRMGGSYLRAIAGNSRQHSSLAIMPLYYKTYQEDGTSTRHLTGLVIRGPHHVRESTDTINLLIVEKTCLSRREAQERLSGGALVNGVWWVRKNAIRKADPTYLAFLHNSLFVPTNFLGELVTTPKHFLRQRQPRILGRNPVWQLWLL.

Disordered regions lie at residues N54 to G82 and E110 to G129. A compositionally biased stretch (basic and acidic residues) spans E56 to A65. Over residues G119–G129 the composition is skewed to acidic residues.

RNA polymerase is composed of three subunits: PA, PB1 and PB2.

It is found in the virion. Its subcellular location is the host nucleus. Its function is as follows. subunit of the RNA-dependent RNA polymerase which is responsible for replication and transcription of virus RNA segments. The transcription of viral mRNAs occurs by a unique mechanism called cap-snatching. 5' methylated caps of cellular mRNAs are cleaved after 10-13 nucleotides by PA. In turn, these short capped RNAs are used as primers by PB1 for transcription of viral mRNAs. During virus replication, PB1 initiates RNA synthesis and copy vRNA into complementary RNA (cRNA) which in turn serves as a template for the production of more vRNAs. The polypeptide is Polymerase acidic protein (PA) (Ixodidae (hardbacked ticks)).